A 519-amino-acid chain; its full sequence is Sorting nexin-2 (519 aa).

Residues 1-104 (MAAEREPPPL…EPSPAVTPVT (104 aa)) form a disordered region. Composition is skewed to low complexity over residues 27–50 (LFTS…LPAE) and 93–104 (SSEPSPAVTPVT). Phosphoserine is present on Ser97. A phosphothreonine mark is found at Thr101 and Thr104. Residues Ser117 and Ser119 each carry the phosphoserine modification. Residues 140 to 269 (FDIEIGVSDP…QFLESSELPR (130 aa)) enclose the PX domain. Residues Arg183, Ser185, Lys211, and Arg235 each contribute to the a 1,2-diacyl-sn-glycero-3-phospho-(1D-myo-inositol-3-phosphate) site. The residue at position 185 (Ser185) is a Phosphoserine. Residues 260–519 (QFLESSELPR…AFLPEAKAIA (260 aa)) are interaction with RhoG. The residue at position 277 (Ser277) is a Phosphoserine. Residues 278-295 (GAGILRMVNKAADAVNKM) form a membrane-binding amphipathic helix region. One can recognise a BAR domain in the interval 299 to 519 (MNESDAWFEE…AFLPEAKAIA (221 aa)). Lys469 is modified (N6-acetyllysine).

Belongs to the sorting nexin family. Predominantly forms heterodimers with BAR domain-containing sorting nexins SNX5, SNX6 and SNX32; can self-associate to form homodimers. The heterodimers are proposed to self-assemble into helical arrays on the membrane to stabilize and expand local membrane curvature underlying endosomal tubule formation. Thought to be a component of the originally described retromer complex (also called SNX-BAR retromer) which is a pentamer containing the heterotrimeric retromer cargo-selective complex (CSC), also described as vacuolar protein sorting subcomplex (VPS), and a heterodimeric membrane-deforming subcomplex formed between SNX1 or SNX2 and SNX5 or SNX6 (also called SNX-BAR subcomplex); the respective CSC and SNX-BAR subcomplexes associate with low affinity. Interacts with SNX5, SNX6, SNX32, VPS26A, VPS29, VPS35, FNBP1, KALRN, RHOG (GDP-bound form).

It localises to the early endosome membrane. Its subcellular location is the cell projection. The protein resides in the lamellipodium. Its function is as follows. Involved in several stages of intracellular trafficking. Interacts with membranes containing phosphatidylinositol 3-phosphate (PtdIns(3P)) or phosphatidylinositol 3,5-bisphosphate (PtdIns(3,5)P2). Acts in part as component of the retromer membrane-deforming SNX-BAR subcomplex. The SNX-BAR retromer mediates retrograde transport of cargo proteins from endosomes to the trans-Golgi network (TGN) and is involved in endosome-to-plasma membrane transport for cargo protein recycling. The SNX-BAR subcomplex functions to deform the donor membrane into a tubular profile called endosome-to-TGN transport carrier (ETC). Can sense membrane curvature and has in vitro vesicle-to-membrane remodeling activity. Required for retrograde endosome-to-TGN transport of TGN38. Promotes KALRN- and RHOG-dependent but retromer-independent membrane remodeling such as lamellipodium formation; the function is dependent on GEF activity of KALRN. The polypeptide is Sorting nexin-2 (SNX2) (Homo sapiens (Human)).